Consider the following 672-residue polypeptide: Beta-galactosidase BgaB (672 aa).

Substrate is bound at residue Arg109. Cys113 serves as a coordination point for Zn(2+). A substrate-binding site is contributed by Asn147. The active-site Proton donor is Glu148. Zn(2+) contacts are provided by Cys156, Cys158, and Cys161. Glu303 acts as the Nucleophile in catalysis. Substrate is bound by residues Trp311 and 351–354; that span reads EKFH.

This sequence belongs to the glycosyl hydrolase 42 family.

It catalyses the reaction Hydrolysis of terminal non-reducing beta-D-galactose residues in beta-D-galactosides.. In Geobacillus sp. (strain Y412MC61), this protein is Beta-galactosidase BgaB.